We begin with the raw amino-acid sequence, 67 residues long: Alpha-actitoxin-Ms11a-3 (67 aa).

A signal peptide spans 1–24 (MASKIFFVLAVFLVMSAVLPESFA). 3 disulfide bridges follow: cysteine 26-cysteine 41, cysteine 33-cysteine 46, and cysteine 40-cysteine 61. Lysine 66 carries the lysine amide modification.

The protein localises to the secreted. It is found in the nematocyst. Alpha-toxins act on postsynaptic membranes, they bind to the nicotinic acetylcholine receptors (nAChR) and thus inhibit them. This toxin shows inhibition against mouse alpha-1-beta-1-delta-epsilon (CHRNA1-CHRNB1-CHRND-CHRNE) (IC(50)=1215 nM), rat alpha-3-beta-4/CHRNA3-CHRNB4 (IC(50)=5.173 uM), rat alpha-7/CHRNA7 (IC(50)=4.786 uM), human alpha-7/CHRNA7 (IC(50)=8.869 uM), and rat alpha-9-alpha-10/CHRNA9-CHRNA10 (IC(50)=202 nM). Also competes with alpha-bungarotoxin for binding to orthosteric sites on muscle-type T.carlifornicus (IC(50)=256 nM) and human alpha-7/CHRNA7 nAChRs (IC(50)=19.81 uM). This Metridium senile (Brown sea anemone) protein is Alpha-actitoxin-Ms11a-3.